Reading from the N-terminus, the 438-residue chain is DNA primase small subunit (438 aa).

Catalysis depends on residues Glu63, Asp127, and Asp129. The Zinc knuckle motif motif lies at 139 to 149 (CCSGAGVCLKC).

This sequence belongs to the eukaryotic-type primase small subunit family. Heterodimer of a catalytic subunit Prim1 and a regulatory subunit Prim2, also known as the DNA primase complex. Component of the alpha DNA polymerase complex (also known as the alpha DNA polymerase-primase complex) consisting of four subunits: the catalytic subunit PolA1, the regulatory subunit PolA2, and the primase complex subunits Prim1 and Prim2 respectively. PolA1 associates with the DNA primase complex before association with PolA2. Mg(2+) serves as cofactor. The cofactor is Mn(2+). Expressed in embryos (at protein level).

Its activity is regulated as follows. The presence of the regulatory subunit Prim2 accelerates the kinetics of initiation and primer extension. In terms of biological role, catalytic subunit of the DNA primase complex and component of the DNA polymerase alpha complex (also known as the alpha DNA polymerase-primase complex) which play an essential role in the initiation of DNA synthesis. During the S phase of the cell cycle, the DNA polymerase alpha complex (composed of a catalytic subunit PolA1, an accessory subunit PolA2 and two primase subunits, the catalytic subunit Prim1 and the regulatory subunit Prim2) is recruited to DNA at the replicative forks. The primase subunit of the polymerase alpha complex initiates DNA synthesis by oligomerising short RNA primers on both leading and lagging strands. These primers are initially extended by the polymerase alpha catalytic subunit and subsequently transferred to polymerase delta and polymerase epsilon for processive synthesis on the lagging and leading strand, respectively. In the primase complex, both subunits are necessary for the initial di-nucleotide formation, but the extension of the primer depends only on the catalytic subunit. Can add both ribo- and deoxynucleotides during elongation of the primers. Binds single stranded DNA. This chain is DNA primase small subunit, found in Drosophila melanogaster (Fruit fly).